The chain runs to 338 residues: CDP-paratose 2-epimerase (338 aa).

Substrate is bound at residue Thr-124. The active-site Proton acceptor is Tyr-164.

It belongs to the NAD(P)-dependent epimerase/dehydratase family. Homotetramer. NAD(+) is required as a cofactor.

It catalyses the reaction CDP-alpha-D-paratose = CDP-3,6-dideoxy-alpha-D-mannose. The protein operates within nucleotide-sugar biosynthesis; CDP-3,6-dideoxy-D-mannose biosynthesis; CDP-3,6-dideoxy-D-mannose from CTP and alpha-D-glucose 1-phosphate: step 5/5. Its function is as follows. Catalyzes the isomeration of CDP-paratose to CDP-tyvelose. The polypeptide is CDP-paratose 2-epimerase (rfbE) (Salmonella typhi).